Reading from the N-terminus, the 1114-residue chain is WD repeat-containing protein 72 (1114 aa).

7 WD repeats span residues 15–54, 60–102, 160–197, 327–373, 413–452, 470–515, and 566–605; these read APPHSITAIMITDDQQTIVTGSQEGQLCLWSLSPELKISA, GHSA…CVEK, KCMCIVHSVRIQEDSLLVVSITGELKVWDLSSSINSIQ, EENK…SKFD, GMTATITSSEYIPNLDKLICGCEDGTIFITKALNAAKAGL, GHHQ…ILHT, and KHLFPVRMIRWHPVENFLIVGCTDDSVYIWEIETGTLERH. Disordered stretches follow at residues 634-658 and 749-798; these read SETHKHKSIEQKSSNSHQPGPVPCP and SLQT…PPRK. The span at 780-796 shows a compositional bias: basic residues; it reads KRQKKMKSSKKAHPKPP. 2 positions are modified to phosphoserine: Ser-1093 and Ser-1095.

In terms of tissue distribution, expressed in maturation stage ameloblasts (at protein level).

Its subcellular location is the cytoplasmic vesicle. In terms of biological role, plays a major role in formation of tooth enamel. Specifically required during the maturation phase of amelogenesis for normal formation of the enamel matrix and clearance of enamel proteins. May be involved in localization of the calcium transporter SLC24A4 to the ameloblast cell membrane. This is WD repeat-containing protein 72 from Mus musculus (Mouse).